We begin with the raw amino-acid sequence, 236 residues long: Leucyl/phenylalanyl-tRNA--protein transferase (236 aa).

Belongs to the L/F-transferase family.

The protein resides in the cytoplasm. It carries out the reaction N-terminal L-lysyl-[protein] + L-leucyl-tRNA(Leu) = N-terminal L-leucyl-L-lysyl-[protein] + tRNA(Leu) + H(+). It catalyses the reaction N-terminal L-arginyl-[protein] + L-leucyl-tRNA(Leu) = N-terminal L-leucyl-L-arginyl-[protein] + tRNA(Leu) + H(+). The catalysed reaction is L-phenylalanyl-tRNA(Phe) + an N-terminal L-alpha-aminoacyl-[protein] = an N-terminal L-phenylalanyl-L-alpha-aminoacyl-[protein] + tRNA(Phe). Functionally, functions in the N-end rule pathway of protein degradation where it conjugates Leu, Phe and, less efficiently, Met from aminoacyl-tRNAs to the N-termini of proteins containing an N-terminal arginine or lysine. This Shewanella sediminis (strain HAW-EB3) protein is Leucyl/phenylalanyl-tRNA--protein transferase.